Here is a 135-residue protein sequence, read N- to C-terminus: Small ribosomal subunit protein bS6 (135 aa).

The disordered stretch occupies residues 96 to 135 (HAEGPSIQMQKRDERERGDRGDRSDRGDRGDRGDRGGFRR). Basic and acidic residues predominate over residues 105-135 (QKRDERERGDRGDRSDRGDRGDRGDRGGFRR).

It belongs to the bacterial ribosomal protein bS6 family.

Functionally, binds together with bS18 to 16S ribosomal RNA. In Cereibacter sphaeroides (strain ATCC 17029 / ATH 2.4.9) (Rhodobacter sphaeroides), this protein is Small ribosomal subunit protein bS6.